The sequence spans 399 residues: Elongation factor Tu (399 aa).

One can recognise a tr-type G domain in the interval Lys10–Glu204. A G1 region spans residues Gly19 to Thr26. Position 19-26 (Gly19–Thr26) interacts with GTP. Mg(2+) is bound at residue Thr26. Positions Gly60–Asn64 are G2. A G3 region spans residues Asp81–Gly84. Residues Asp81–His85 and Asn136–Asp139 each bind GTP. The interval Asn136–Asp139 is G4. The G5 stretch occupies residues Ser174 to Leu176.

It belongs to the TRAFAC class translation factor GTPase superfamily. Classic translation factor GTPase family. EF-Tu/EF-1A subfamily. Monomer.

The protein resides in the cytoplasm. It carries out the reaction GTP + H2O = GDP + phosphate + H(+). Its function is as follows. GTP hydrolase that promotes the GTP-dependent binding of aminoacyl-tRNA to the A-site of ribosomes during protein biosynthesis. This chain is Elongation factor Tu, found in Parasynechococcus marenigrum (strain WH8102).